A 431-amino-acid polypeptide reads, in one-letter code: MTWLSGLYFISIASLVFCVIGLILSGIILISRKFLVKTHACKLKINDDDSLTKTVDSGRTLLSSLLDSGIPIPSPCGGKATCKQCKVKIVKNADQPLETDRATFSKQQLEQGWRLSCQTKVQHDMCLEIEERYLNASSWEGTVVSNDNVATFIKELVVSVSPEHPIPYKPGGYLQIRVPPYKTNTSDWKQTMAPEYYSDWEHFNLFDRTIDNSLLELDSANKAYSLASYPAELPVIKFNIRIATPPFINNAPNPEIPWGICSSYIFSLKPGDKITVSGPYGESFMKENNRPLIFLIGGAGSSFGRSHILDLLLNKHSTRDITLWYGARSLKENIYQEEYEKLEKDFSNFHYHLVLSEPLPEDIDSGWDKNDPEKTNFLFRAFELGQLSKLSNPEDYLYYVCGPPLHNSSILKLLDNYGVERSSIILDDFGS.

A helical transmembrane segment spans residues 10 to 30 (ISIASLVFCVIGLILSGIILI). In terms of domain architecture, 2Fe-2S ferredoxin-type spans 41–133 (CKLKINDDDS…DMCLEIEERY (93 aa)). Positions 76, 82, 85, and 117 each coordinate [2Fe-2S] cluster. Residues 136-286 (ASSWEGTVVS…SGPYGESFMK (151 aa)) form the FAD-binding FR-type domain.

This sequence belongs to the NqrF family. Composed of six subunits; NqrA, NqrB, NqrC, NqrD, NqrE and NqrF. The cofactor is [2Fe-2S] cluster. FAD serves as cofactor.

Its subcellular location is the cell inner membrane. The catalysed reaction is a ubiquinone + n Na(+)(in) + NADH + H(+) = a ubiquinol + n Na(+)(out) + NAD(+). Functionally, NQR complex catalyzes the reduction of ubiquinone-1 to ubiquinol by two successive reactions, coupled with the transport of Na(+) ions from the cytoplasm to the periplasm. The first step is catalyzed by NqrF, which accepts electrons from NADH and reduces ubiquinone-1 to ubisemiquinone by a one-electron transfer pathway. The chain is Na(+)-translocating NADH-quinone reductase subunit F from Chlamydia caviae (strain ATCC VR-813 / DSM 19441 / 03DC25 / GPIC) (Chlamydophila caviae).